We begin with the raw amino-acid sequence, 256 residues long: Osteocalcin 2 (256 aa).

Positions 1 to 18 (MKTLVLLSICALLSVCWS) are cleaved as a signal peptide. Positions 19–209 (MGAVEPEVVV…LASVLLRRRR (191 aa)) are excised as a propeptide. Low complexity predominate over residues 38–186 (AAPADPAAAA…SSSSSSSSES (149 aa)). The interval 38-193 (AAPADPAAAA…SESASDEAAK (156 aa)) is disordered. The Gla domain maps to 218-252 (PLQLESLREVCELNIACDEMAETAGIVAAYVAYYG). Residues E222, E226, E229, and D235 each coordinate Ca(2+). 4-carboxyglutamate occurs at positions 222, 226, and 229. C228 and C234 are oxidised to a cystine. E236 is modified (4-carboxyglutamate).

The protein belongs to the osteocalcin/matrix Gla protein family. In terms of processing, gamma-carboxyglutamate residues are formed by vitamin K dependent carboxylation by GGCX. These residues are essential for the binding of calcium.

Its subcellular location is the secreted. In terms of biological role, the carboxylated form is one of the main organic components of the bone matrix, which constitutes 1-2% of the total bone protein. The carboxylated form binds strongly to apatite and calcium. In Diplodus sargus (White seabream), this protein is Osteocalcin 2.